The following is a 391-amino-acid chain: GTPase Obg (391 aa).

An Obg domain is found at 1 to 159 (MKFVDEASIL…RDLLLELMLL (159 aa)). The interval 127–147 (NTRFKSSVNRTPRQKTNGTPG) is disordered. Polar residues predominate over residues 129 to 145 (RFKSSVNRTPRQKTNGT). The OBG-type G domain maps to 160–333 (ADVGMLGMPN…LCWDVMTFII (174 aa)). GTP-binding positions include 166-173 (GMPNAGKS), 191-195 (FTTLV), 213-216 (DIPG), 283-286 (NKID), and 314-316 (SAA). The Mg(2+) site is built by Ser-173 and Thr-193.

The protein belongs to the TRAFAC class OBG-HflX-like GTPase superfamily. OBG GTPase family. In terms of assembly, monomer. Requires Mg(2+) as cofactor.

The protein localises to the cytoplasm. Functionally, an essential GTPase which binds GTP, GDP and possibly (p)ppGpp with moderate affinity, with high nucleotide exchange rates and a fairly low GTP hydrolysis rate. Plays a role in control of the cell cycle, stress response, ribosome biogenesis and in those bacteria that undergo differentiation, in morphogenesis control. The protein is GTPase Obg of Salmonella arizonae (strain ATCC BAA-731 / CDC346-86 / RSK2980).